A 916-amino-acid polypeptide reads, in one-letter code: Bifunctional aspartokinase/homoserine dehydrogenase 2, chloroplastic (916 aa).

The N-terminal 87 residues, 1–87 (MATLKPSFTV…VDQVQIPKGE (87 aa)), are a transit peptide targeting the chloroplast. The aspartokinase stretch occupies residues 88 to 336 (MWSVHKFGGT…VNEAVILQTL (249 aa)). The tract at residues 337-562 (SYQEAWEMSY…LSRTTLAMGI (226 aa)) is interface. 2 consecutive ACT domains span residues 412 to 487 (VEGT…VIPN) and 493 to 570 (AVGQ…LIGA). The homoserine dehydrogenase stretch occupies residues 563 to 916 (VGPGLIGATL…RLASYLGAPS (354 aa)). I568 contacts NAD(+). NADP(+)-binding residues include I568, K600, T649, and K673. Residue I568 participates in NADPH binding. T649 is an NAD(+) binding site. NADPH is bound by residues T649 and K673. The Na(+) site is built by E700, V703, A705, and L707. The NADP(+) site is built by G758 and E761. Residues E761 and D772 each coordinate L-homoserine. K776 (proton donor) is an active-site residue. G893 lines the NAD(+) pocket. G893 serves as a coordination point for NADP(+). G893 lines the NADPH pocket.

It in the N-terminal section; belongs to the aspartokinase family. This sequence in the C-terminal section; belongs to the homoserine dehydrogenase family. Homo- or heterodimer. A metal cation is required as a cofactor.

It localises to the plastid. The protein resides in the chloroplast. It carries out the reaction L-homoserine + NADP(+) = L-aspartate 4-semialdehyde + NADPH + H(+). It catalyses the reaction L-homoserine + NAD(+) = L-aspartate 4-semialdehyde + NADH + H(+). The catalysed reaction is L-aspartate + ATP = 4-phospho-L-aspartate + ADP. It functions in the pathway amino-acid biosynthesis; L-lysine biosynthesis via DAP pathway; (S)-tetrahydrodipicolinate from L-aspartate: step 1/4. It participates in amino-acid biosynthesis; L-methionine biosynthesis via de novo pathway; L-homoserine from L-aspartate: step 1/3. The protein operates within amino-acid biosynthesis; L-methionine biosynthesis via de novo pathway; L-homoserine from L-aspartate: step 3/3. Its pathway is amino-acid biosynthesis; L-threonine biosynthesis; L-threonine from L-aspartate: step 1/5. It functions in the pathway amino-acid biosynthesis; L-threonine biosynthesis; L-threonine from L-aspartate: step 3/5. With respect to regulation, threonine interaction with Gln-443 leads to inhibition of aspartate kinase activity and facilitates the binding of a second threonine on Gln-524, leading to a partial inhibition of homoserine dehydrogenase activity (25% of activity remaining at saturation with threonine). Homoserine dehydrogenase activity is also partially inhibited by cysteine (15% of activity remaining at saturation with cysteine). No synergy between threonine and cysteine for the inhibition. 13-fold activation of aspartate kinase activity by cysteine, isoleucine, valine, serine and alanine at 2.5 mM and 4-fold activation by leucine at 2.5 mM, but no activation of homoserine dehydrogenase activity. Bifunctional aspartate kinase and homoserine dehydrogenase that catalyzes the first and the third steps toward the synthesis of lysine, methionine and threonine from aspartate. This chain is Bifunctional aspartokinase/homoserine dehydrogenase 2, chloroplastic (AKHSDH2), found in Arabidopsis thaliana (Mouse-ear cress).